The following is a 267-amino-acid chain: Dolichol-phosphate mannosyltransferase (267 aa).

The residue at position 2 (S2) is an N-acetylserine. The Cytoplasmic segment spans residues 2–238 (SIEYSVIVPA…QQLKELYVFK (237 aa)). GDP-alpha-D-mannose-binding residues include P10, Y12, E14, V42, D44, D95, A96, D97, Q99, and R122. Mg(2+) is bound by residues D97 and Q99. Residues D97 and Q99 each contribute to the Mn(2+) site. At S141 the chain carries Phosphoserine; by PKA. The GDP-alpha-D-mannose site is built by K183, R212, and K218. A helical; Anchor for type IV membrane protein membrane pass occupies residues 239 to 259 (FGANNLILFITFWSILFFYVC). Residues 260–267 (YQLYHLVF) are Lumenal-facing.

Belongs to the glycosyltransferase 2 family. Interacts with the C-terminus of SAC1, thereby sequestering it to the endoplasmic reticulum in exponentially growing cells. Under nutrient limitation conditions, this interaction is rapidly abolished. Requires Mg(2+) as cofactor. The cofactor is Mn(2+). Ca(2+) is required as a cofactor.

It is found in the endoplasmic reticulum membrane. The catalysed reaction is a di-trans,poly-cis-dolichyl phosphate + GDP-alpha-D-mannose = a di-trans,poly-cis-dolichyl beta-D-mannosyl phosphate + GDP. The protein operates within protein modification; protein glycosylation. Inhibited by acetylsalicylic acid (aspirin). Its function is as follows. Transfers mannose from GDP-mannose to dolichol monophosphate to form dolichol phosphate mannose (Dol-P-Man) which is the mannosyl donor in pathways leading to N-glycosylation, glycosyl phosphatidylinositol membrane anchoring, and O-mannosylation of proteins. In Saccharomyces cerevisiae (strain ATCC 204508 / S288c) (Baker's yeast), this protein is Dolichol-phosphate mannosyltransferase.